The sequence spans 184 residues: Peptide deformylase (184 aa).

Residues Cys-111 and His-154 each contribute to the Fe cation site. Residue Glu-155 is part of the active site. His-158 is a Fe cation binding site.

This sequence belongs to the polypeptide deformylase family. The cofactor is Fe(2+).

It catalyses the reaction N-terminal N-formyl-L-methionyl-[peptide] + H2O = N-terminal L-methionyl-[peptide] + formate. In terms of biological role, removes the formyl group from the N-terminal Met of newly synthesized proteins. Requires at least a dipeptide for an efficient rate of reaction. N-terminal L-methionine is a prerequisite for activity but the enzyme has broad specificity at other positions. The polypeptide is Peptide deformylase (Lactobacillus helveticus (strain DPC 4571)).